The chain runs to 101 residues: NADH-quinone oxidoreductase subunit K (101 aa).

A run of 3 helical transmembrane segments spans residues 4–24, 30–50, and 62–82; these read LGHM…GIFL, IVLL…FVAF, and FVFF…AILV.

This sequence belongs to the complex I subunit 4L family. NDH-1 is composed of 14 different subunits. Subunits NuoA, H, J, K, L, M, N constitute the membrane sector of the complex.

The protein resides in the cell inner membrane. It catalyses the reaction a quinone + NADH + 5 H(+)(in) = a quinol + NAD(+) + 4 H(+)(out). Its function is as follows. NDH-1 shuttles electrons from NADH, via FMN and iron-sulfur (Fe-S) centers, to quinones in the respiratory chain. The immediate electron acceptor for the enzyme in this species is believed to be ubiquinone. Couples the redox reaction to proton translocation (for every two electrons transferred, four hydrogen ions are translocated across the cytoplasmic membrane), and thus conserves the redox energy in a proton gradient. In Stenotrophomonas maltophilia (strain R551-3), this protein is NADH-quinone oxidoreductase subunit K.